A 402-amino-acid chain; its full sequence is Pyridinium-3,5-bisthiocarboxylic acid mononucleotide nickel insertion protein (402 aa).

Belongs to the LarC family.

It catalyses the reaction Ni(II)-pyridinium-3,5-bisthiocarboxylate mononucleotide = pyridinium-3,5-bisthiocarboxylate mononucleotide + Ni(2+). Involved in the biosynthesis of a nickel-pincer cofactor ((SCS)Ni(II) pincer complex). Binds Ni(2+), and functions in nickel delivery to pyridinium-3,5-bisthiocarboxylic acid mononucleotide (P2TMN), to form the mature cofactor. Is thus probably required for the activation of nickel-pincer cofactor-dependent enzymes. This is Pyridinium-3,5-bisthiocarboxylic acid mononucleotide nickel insertion protein from Desulfitobacterium hafniense (strain Y51).